Reading from the N-terminus, the 115-residue chain is Large ribosomal subunit protein bL20 (115 aa).

It belongs to the bacterial ribosomal protein bL20 family.

In terms of biological role, binds directly to 23S ribosomal RNA and is necessary for the in vitro assembly process of the 50S ribosomal subunit. It is not involved in the protein synthesizing functions of that subunit. The sequence is that of Large ribosomal subunit protein bL20 from Synechococcus sp. (strain WH7803).